The sequence spans 303 residues: tRNA dimethylallyltransferase 1 (303 aa).

9-16 (GPTASGKT) contacts ATP. A substrate-binding site is contributed by 11 to 16 (TASGKT). Interaction with substrate tRNA regions lie at residues 34-37 (DSAL), 158-162 (QRLIR), and 239-244 (RCVGYR).

Belongs to the IPP transferase family. Monomer. Mg(2+) is required as a cofactor.

It carries out the reaction adenosine(37) in tRNA + dimethylallyl diphosphate = N(6)-dimethylallyladenosine(37) in tRNA + diphosphate. In terms of biological role, catalyzes the transfer of a dimethylallyl group onto the adenine at position 37 in tRNAs that read codons beginning with uridine, leading to the formation of N6-(dimethylallyl)adenosine (i(6)A). The chain is tRNA dimethylallyltransferase 1 from Shewanella sediminis (strain HAW-EB3).